A 243-amino-acid chain; its full sequence is Uridylate kinase (243 aa).

15–18 (KMSG) contacts ATP. G57 serves as a coordination point for UMP. Residues G58 and R62 each coordinate ATP. UMP is bound by residues D77 and 138 to 145 (TGNPLVTT). 4 residues coordinate ATP: T165, N166, Y171, and D174.

Belongs to the UMP kinase family. Homohexamer.

Its subcellular location is the cytoplasm. It carries out the reaction UMP + ATP = UDP + ADP. It participates in pyrimidine metabolism; CTP biosynthesis via de novo pathway; UDP from UMP (UMPK route): step 1/1. Its activity is regulated as follows. Inhibited by UTP. Its function is as follows. Catalyzes the reversible phosphorylation of UMP to UDP. This chain is Uridylate kinase, found in Coxiella burnetii (strain RSA 493 / Nine Mile phase I).